Reading from the N-terminus, the 72-residue chain is SAPAQWKLWLVMDPRTVMIGTAAWLGVLALLIHFLLLGTERFNWIDTGLKEQKATAAAQAAITPAPVTAAAK.

Over 1–16 (SAPAQWKLWLVMDPRT) the chain is Cytoplasmic. A helical transmembrane segment spans residues 17–37 (VMIGTAAWLGVLALLIHFLLL). His-33 provides a ligand contact to a bacteriochlorophyll. Over 38–72 (GTERFNWIDTGLKEQKATAAAQAAITPAPVTAAAK) the chain is Periplasmic.

It belongs to the antenna complex alpha subunit family. As to quaternary structure, the core complex is formed by different alpha and beta chains, binding bacteriochlorophyll molecules, and arranged most probably in tetrameric structures disposed around the reaction center. The non-pigmented gamma chains may constitute additional components.

It localises to the cell inner membrane. Antenna complexes are light-harvesting systems, which transfer the excitation energy to the reaction centers. This chain is Light-harvesting polypeptide B-885 alpha-1 chain, found in Rhodocyclus tenuis (Rhodospirillum tenue).